The sequence spans 338 residues: Lipoate-protein ligase A (338 aa).

One can recognise a BPL/LPL catalytic domain in the interval 29-216; it reads PATQRVLFLW…AFFAHYGERV (188 aa). ATP contacts are provided by residues Arg-71, 76–79, and Lys-134; that span reads GAVF. Lys-134 provides a ligand contact to (R)-lipoate.

Belongs to the LplA family. In terms of assembly, monomer.

It localises to the cytoplasm. The catalysed reaction is L-lysyl-[lipoyl-carrier protein] + (R)-lipoate + ATP = N(6)-[(R)-lipoyl]-L-lysyl-[lipoyl-carrier protein] + AMP + diphosphate + H(+). It participates in protein modification; protein lipoylation via exogenous pathway; protein N(6)-(lipoyl)lysine from lipoate: step 1/2. Its pathway is protein modification; protein lipoylation via exogenous pathway; protein N(6)-(lipoyl)lysine from lipoate: step 2/2. Catalyzes both the ATP-dependent activation of exogenously supplied lipoate to lipoyl-AMP and the transfer of the activated lipoyl onto the lipoyl domains of lipoate-dependent enzymes. The sequence is that of Lipoate-protein ligase A from Escherichia coli O1:K1 / APEC.